A 279-amino-acid chain; its full sequence is uncharacterized protein (279 aa).

The first 21 residues, 1 to 21, serve as a signal peptide directing secretion; it reads MKIIRTLFLLLIAVYGSSVVA.

It to E.coli YfcO.

This is an uncharacterized protein from Salmonella typhimurium (strain LT2 / SGSC1412 / ATCC 700720).